The sequence spans 408 residues: Aminoacylase-1 (408 aa).

Residue histidine 76 participates in Zn(2+) binding. Aspartate 78 is a catalytic residue. Aspartate 109 is a Zn(2+) binding site. The active-site Proton acceptor is glutamate 143. 3 residues coordinate Zn(2+): glutamate 144, glutamate 172, and histidine 379.

The protein belongs to the peptidase M20A family. In terms of assembly, homodimer. Zn(2+) is required as a cofactor.

The protein localises to the cytoplasm. The catalysed reaction is an N-acyl-L-amino acid + H2O = an L-alpha-amino acid + a carboxylate. It catalyses the reaction an N-acetyl-L-cysteine-S-conjugate + H2O = an S-substituted L-cysteine + acetate. In terms of biological role, involved in the hydrolysis of N-acylated or N-acetylated amino acids (except L-aspartate). The polypeptide is Aminoacylase-1 (acy1) (Dictyostelium discoideum (Social amoeba)).